We begin with the raw amino-acid sequence, 859 residues long: DNA mismatch repair protein MutS (859 aa).

622-629 (GPNMGGKS) serves as a coordination point for ATP.

The protein belongs to the DNA mismatch repair MutS family.

This protein is involved in the repair of mismatches in DNA. It is possible that it carries out the mismatch recognition step. This protein has a weak ATPase activity. The protein is DNA mismatch repair protein MutS of Syntrophomonas wolfei subsp. wolfei (strain DSM 2245B / Goettingen).